Consider the following 72-residue polypeptide: DNA gyrase inhibitor YacG (72 aa).

Residues Cys14, Cys17, Cys33, and Cys37 each contribute to the Zn(2+) site.

Belongs to the DNA gyrase inhibitor YacG family. Interacts with GyrB. The cofactor is Zn(2+).

In terms of biological role, inhibits all the catalytic activities of DNA gyrase by preventing its interaction with DNA. Acts by binding directly to the C-terminal domain of GyrB, which probably disrupts DNA binding by the gyrase. In Mannheimia succiniciproducens (strain KCTC 0769BP / MBEL55E), this protein is DNA gyrase inhibitor YacG.